The chain runs to 98 residues: NADH-ubiquinone oxidoreductase chain 4L (98 aa).

3 helical membrane passes run 1–21 (MPPIYMNIILAFTLSLMGMLV), 29–49 (SLLCLEGMMLSLFILGTTMAL), and 61–81 (IVLLVFAACEAAVGLSLLVMV).

This sequence belongs to the complex I subunit 4L family. As to quaternary structure, core subunit of respiratory chain NADH dehydrogenase (Complex I) which is composed of 45 different subunits.

The protein resides in the mitochondrion inner membrane. The enzyme catalyses a ubiquinone + NADH + 5 H(+)(in) = a ubiquinol + NAD(+) + 4 H(+)(out). In terms of biological role, core subunit of the mitochondrial membrane respiratory chain NADH dehydrogenase (Complex I) which catalyzes electron transfer from NADH through the respiratory chain, using ubiquinone as an electron acceptor. Part of the enzyme membrane arm which is embedded in the lipid bilayer and involved in proton translocation. The sequence is that of NADH-ubiquinone oxidoreductase chain 4L (MT-ND4L) from Orycteropus afer (Aardvark).